Reading from the N-terminus, the 209-residue chain is NAD(P)H dehydrogenase (quinone) (209 aa).

Residues 4–199 (VNIIFHSVHA…EMARYQGRHV (196 aa)) form the Flavodoxin-like domain. FMN contacts are provided by residues 10–15 (SVHAHI) and 87–89 (TRY). Trp-107 lines the substrate pocket. Residues 122 to 128 (SSGTQHG) and His-143 each bind FMN.

It belongs to the WrbA family. FMN serves as cofactor.

It catalyses the reaction a quinone + NADH + H(+) = a quinol + NAD(+). The enzyme catalyses a quinone + NADPH + H(+) = a quinol + NADP(+). This Methanosarcina mazei (strain ATCC BAA-159 / DSM 3647 / Goe1 / Go1 / JCM 11833 / OCM 88) (Methanosarcina frisia) protein is NAD(P)H dehydrogenase (quinone).